The sequence spans 1264 residues: Multifunctional 2-oxoglutarate metabolism enzyme (1264 aa).

The tract at residues 1–41 (MSSSPSPFGQNEWLVEEMYRKFREDPSSVDPSWHEFLVDYN) is 2-oxoglutarate dehydrogenase E1, N-terminal part. Positions 23–37 (REDPSSVDPSWHEFL) are enriched in basic and acidic residues. A disordered region spans residues 23–140 (REDPSSVDPS…AQPADDSDQN (118 aa)). A linker region spans residues 42-102 (PEPTTDSSAS…SKPQAKAKPA (61 aa)). Polar residues predominate over residues 43-59 (EPTTDSSASENGQQTRT). The segment covering 63–73 (KAPPEPAPAPA) has biased composition (pro residues). A succinyltransferase E2 region spans residues 103–373 (ESKSSTKPAD…LRTVHQLLLS (271 aa)). Histidine 352 serves as the catalytic Proton acceptor; for succinyltransferase activity. Positions 374–1264 (DDFFDEIFRE…QEILDEAFAP (891 aa)) are 2-oxoglutarate dehydrogenase E1, C-terminal part. Thiamine diphosphate is bound at residue arginine 578. 2 residues coordinate 2-oxoglutarate: histidine 617 and serine 642. Residues serine 642, leucine 644, aspartate 681, alanine 682, alanine 683, and asparagine 714 each coordinate thiamine diphosphate. A Mg(2+)-binding site is contributed by aspartate 681. The Mg(2+) site is built by asparagine 714 and isoleucine 716. A coiled-coil region spans residues 819–850 (DISMKEAEDALRDYQGQLEQVFNEVRELEKHE). 2-oxoglutarate is bound at residue histidine 1056. The acetyl-CoA site is built by threonine 1074, arginine 1090, lysine 1125, serine 1128, glutamine 1178, arginine 1185, and arginine 1186.

The protein belongs to the 2-oxoacid dehydrogenase family. Kgd subfamily. Homodimer. The 2-oxoglutarate dehydrogenase (ODH) complex contains multiple copies of three enzymatic components: 2-oxoglutarate dehydrogenase (E1), dihydrolipoamide succinyltransferase (E2) and lipoamide dehydrogenase (E3). Mg(2+) is required as a cofactor. Requires thiamine diphosphate as cofactor.

The catalysed reaction is glyoxylate + 2-oxoglutarate + H(+) = 2-hydroxy-3-oxoadipate + CO2. The enzyme catalyses 2-oxoglutarate + H(+) = succinate semialdehyde + CO2. It carries out the reaction N(6)-[(R)-lipoyl]-L-lysyl-[protein] + 2-oxoglutarate + H(+) = N(6)-[(R)-S(8)-succinyldihydrolipoyl]-L-lysyl-[protein] + CO2. It catalyses the reaction N(6)-[(R)-dihydrolipoyl]-L-lysyl-[protein] + succinyl-CoA = N(6)-[(R)-S(8)-succinyldihydrolipoyl]-L-lysyl-[protein] + CoA. It participates in carbohydrate metabolism; tricarboxylic acid cycle; succinate from 2-oxoglutarate (transferase route): step 1/2. It functions in the pathway carbohydrate metabolism; tricarboxylic acid cycle; succinyl-CoA from 2-oxoglutarate (dehydrogenase route): step 1/1. Its activity is regulated as follows. Alpha-ketoglutarate dehydrogenase and decarboxylase activities are inhibited by unphosphorylated GarA, and allosterically activated by acetyl-CoA, the main substrate of the TCA cycle. In terms of biological role, shows three enzymatic activities that share a first common step, the attack of thiamine-PP on 2-oxoglutarate (alpha-ketoglutarate, KG), leading to the formation of an enamine-thiamine-PP intermediate upon decarboxylation. Thus, displays KGD activity, catalyzing the decarboxylation from five-carbon 2-oxoglutarate to four-carbon succinate semialdehyde (SSA). Also catalyzes C-C bond formation between the activated aldehyde formed after decarboxylation of alpha-ketoglutarate and the carbonyl of glyoxylate (GLX), to yield 2-hydroxy-3-oxoadipate (HOA), which spontaneously decarboxylates to form 5-hydroxylevulinate (HLA). And is also a component of the 2-oxoglutarate dehydrogenase (ODH) complex, that catalyzes the overall conversion of 2-oxoglutarate to succinyl-CoA and CO(2). The KG decarboxylase and KG dehydrogenase reactions provide two alternative, tightly regulated, pathways connecting the oxidative and reductive branches of the TCA cycle. The polypeptide is Multifunctional 2-oxoglutarate metabolism enzyme (kgd) (Mycobacterium sp. (strain JLS)).